A 288-amino-acid chain; its full sequence is MQIINDPTEMQKTAESLRLKHQFIAVVMTMGALHEGHLSLIKLAKERAGSVILTIFVNPRQFGPEEDFQRYPRPLEKDASMARSAGVDYLFAPDPELIYPEAFQTQVSTGDIATRFEGAARPGHFDGMATVVLKLLLLSKAHLAVFGEKDAQQLAVIKQMVRDFNIDTTILGAPTVRESDGLAISSRNIYLSSEERKQATVLNESMCRARELLHMKQTDCKLIIEEVTKVIASAPDAIIDYATIVDESNFRETAILKPDINYLLLLAVKIGSTRLIDNGVLRVSQQDV.

Position 30 to 37 (30 to 37 (MGALHEGH)) interacts with ATP. His37 serves as the catalytic Proton donor. Gln61 serves as a coordination point for (R)-pantoate. Gln61 contributes to the beta-alanine binding site. 147–150 (GEKD) provides a ligand contact to ATP. Residue Gln153 coordinates (R)-pantoate. ATP is bound by residues Val176 and 184 to 187 (ISSR).

The protein belongs to the pantothenate synthetase family. As to quaternary structure, homodimer.

The protein resides in the cytoplasm. The enzyme catalyses (R)-pantoate + beta-alanine + ATP = (R)-pantothenate + AMP + diphosphate + H(+). It functions in the pathway cofactor biosynthesis; (R)-pantothenate biosynthesis; (R)-pantothenate from (R)-pantoate and beta-alanine: step 1/1. Catalyzes the condensation of pantoate with beta-alanine in an ATP-dependent reaction via a pantoyl-adenylate intermediate. In Chlorobium phaeobacteroides (strain BS1), this protein is Pantothenate synthetase.